The sequence spans 629 residues: 1-deoxy-D-xylulose-5-phosphate synthase (629 aa).

Thiamine diphosphate-binding positions include histidine 72 and glycine 113 to alanine 115. Residue aspartate 144 coordinates Mg(2+). Residues glycine 145–alanine 146, asparagine 174, tyrosine 287, and glutamate 370 each bind thiamine diphosphate. Mg(2+) is bound at residue asparagine 174.

Belongs to the transketolase family. DXPS subfamily. In terms of assembly, homodimer. Mg(2+) is required as a cofactor. Thiamine diphosphate serves as cofactor.

The catalysed reaction is D-glyceraldehyde 3-phosphate + pyruvate + H(+) = 1-deoxy-D-xylulose 5-phosphate + CO2. It functions in the pathway metabolic intermediate biosynthesis; 1-deoxy-D-xylulose 5-phosphate biosynthesis; 1-deoxy-D-xylulose 5-phosphate from D-glyceraldehyde 3-phosphate and pyruvate: step 1/1. Catalyzes the acyloin condensation reaction between C atoms 2 and 3 of pyruvate and glyceraldehyde 3-phosphate to yield 1-deoxy-D-xylulose-5-phosphate (DXP). The polypeptide is 1-deoxy-D-xylulose-5-phosphate synthase (Prochlorococcus marinus (strain AS9601)).